The following is a 210-amino-acid chain: Meiotic coiled-coil protein 7 (210 aa).

Positions 77–148 (KRSRESVLGS…LKTQLSNLNH (72 aa)) form a coiled coil.

This sequence belongs to the MND1 family. In terms of assembly, interacts with meu13.

Its subcellular location is the cytoplasm. It localises to the nucleus. Required for meiotic recombination. In Schizosaccharomyces pombe (strain 972 / ATCC 24843) (Fission yeast), this protein is Meiotic coiled-coil protein 7 (mcp7).